We begin with the raw amino-acid sequence, 242 residues long: Glutathione S-transferase 3 (242 aa).

The 79-residue stretch at 1 to 79 (MIVLHHLKNS…HLVRKYGPSF (79 aa)) folds into the GST N-terminal domain. The 150-residue stretch at 85 to 234 (DVAELEKYEL…ERYSHPPTPP (150 aa)) folds into the GST C-terminal domain. Phosphoserine is present on Ser228. Thr232 bears the Phosphothreonine mark.

It belongs to the GST superfamily. Interacts with sad1.

It localises to the cytoplasm. The enzyme catalyses RX + glutathione = an S-substituted glutathione + a halide anion + H(+). Its function is as follows. May have a role in the detoxification of various heavy metals. In Schizosaccharomyces pombe (strain 972 / ATCC 24843) (Fission yeast), this protein is Glutathione S-transferase 3 (gst3).